The chain runs to 161 residues: Photosystem I reaction center subunit XI (161 aa).

Helical transmembrane passes span 84-104 and 126-146; these read LISTIALVLIATICLSAYGLV and FTGGFFIGAMGGAVVAFFLLE.

This sequence belongs to the PsaL family.

It is found in the cellular thylakoid membrane. The sequence is that of Photosystem I reaction center subunit XI from Trichodesmium erythraeum (strain IMS101).